Reading from the N-terminus, the 1200-residue chain is NACHT, LRR and PYD domains-containing protein 5 (1200 aa).

One can recognise a Pyrin domain in the interval Ser57–Arg148. Residues Ala142 to Glu152 show a composition bias toward basic and acidic residues. A disordered region spans residues Ala142–Thr232. The span at Gln173–Ala182 shows a compositional bias: polar residues. 2 stretches are compositionally biased toward low complexity: residues Gln192 to Ala202 and Ile209 to Ala221. An NACHT domain is found at Arg280–Glu602. Residue Gly286–Ser293 coordinates ATP. LRR repeat units follow at residues Leu704–Leu727, Cys730–Cys753, His780–Ala803, Thr809–Ile832, Asn836–His863, Lys865–Thr892, Ser893–Asp916, Asn950–Arg973, His979–Leu1002, Asn1007–Glu1034, Ser1036–Cys1059, Ser1064–Lys1092, and Asn1121–Leu1142.

This sequence belongs to the NLRP family. Component of the subcortical maternal complex (SCMC), at least composed of NLRP5, KHDC3, OOEP, and TLE6 isoform 1. Within the complex, interacts with OOEP, KHDC3L and TLE6. The SCMC may facilitate translocation of its components between the nuclear and cytoplasmic compartments. As part of the SCMC interacts with the SCMC-associated protein ZBED3. As part of the SCMC interacts with the SCMC-associated protein CFL1/Cofilin-1. Interacts with PRKCE. Interacts with TUBB3 at cytoskeleton microtubules. Post-translationally, phosphorylated by PRKCE. In terms of tissue distribution, expressed in cumulus cells (at protein level). Highly abundant in oocytes and early embryos, however poorly expressed in somatic tissues such as the liver and spinal cord.

Its subcellular location is the cytoplasm. The protein resides in the cytoplasmic vesicle. It localises to the secretory vesicle. The protein localises to the cortical granule. It is found in the mitochondrion. Its subcellular location is the nucleus. The protein resides in the nucleolus. It localises to the golgi apparatus. Component of the subcortical maternal complex (SCMC), a multiprotein complex that plays a key role in early embryonic development. The SCMC complex is a structural constituent of cytoplasmic lattices, which consist in fibrous structures found in the cytoplasm of oocytes and preimplantation embryos. They are required to store maternal proteins critical for embryonic development, such as proteins that control epigenetic reprogramming of the preimplantation embryo, and prevent their degradation or activation. Required for the localization of cortical granules to the cortex of oocytes, via association with the cortical actin scaffold. Required for cortical actin clearance prior to oocyte exocytosis and prevention of polyspermy. Involved in regulating post-fertilization Ca(2+) release and endoplasmic reticulum storage (ER) storage via regulation of cellular localization. May be involved in the localization of mitochondria to the cytoplasm and perinuclear region in oocytes and early stage embryos, independent of its role in CPL formation. This is NACHT, LRR and PYD domains-containing protein 5 (NLRP5) from Homo sapiens (Human).